A 362-amino-acid chain; its full sequence is Outer membrane porin F (362 aa).

An N-terminal signal peptide occupies residues 1 to 22 (MMKRNILAVIVPALLVAGTANA). The chain crosses the membrane as a beta stranded span at residues 23–28 (AEIYNK). Position 29 (Asp29) is a topological domain, periplasmic. A beta stranded membrane pass occupies residues 30–45 (GNKVDLYGKAVGLHYF). The Extracellular portion of the chain corresponds to 46–60 (SKGNGENSYGGNGDM). Residues 61–73 (TYARLGFKGETQI) traverse the membrane as a beta stranded segment. At 74–75 (NS) the chain is on the periplasmic side. A beta stranded transmembrane segment spans residues 76–88 (DLTGYGQWEYNFQ). The Extracellular portion of the chain corresponds to 89–104 (GNNSEGADAQTGNKTR). The beta stranded transmembrane segment at 105-113 (LAFAGLKYA) threads the bilayer. Residues 114-115 (DV) lie on the Periplasmic side of the membrane. The chain crosses the membrane as a beta stranded span at residues 116–122 (GSFDYGR). The Extracellular portion of the chain corresponds to 123-156 (NYGVVYDALGYTDMLPEFGGDTAYSDDFFVGRVG). A beta stranded membrane pass occupies residues 157 to 163 (GVATYRN). Topologically, residues 164 to 171 (SNFFGLVD) are periplasmic. Residues 172–181 (GLNFAVQYLG) form a beta stranded membrane-spanning segment. Residues 182 to 193 (KNERDTARRSNG) lie on the Extracellular side of the membrane. Residues 194–204 (DGVGGSISYEY) form a beta stranded membrane-spanning segment. Glu205 is a topological domain (periplasmic). A beta stranded membrane pass occupies residues 206-217 (GFGIVGAYGAAD). At 218–232 (RTNLQEAQPLGNGKK) the chain is on the extracellular side. The chain crosses the membrane as a beta stranded span at residues 233-244 (AEQWATGLKYDA). Asn245 is a topological domain (periplasmic). A beta stranded membrane pass occupies residues 246-257 (NIYLAANYGETR). Topologically, residues 258-274 (NATPITNKFTNTSGFAN) are extracellular. A beta stranded membrane pass occupies residues 275-287 (KTQDVLLVAQYQF). Topologically, residues 288-289 (DF) are periplasmic. The chain crosses the membrane as a beta stranded span at residues 290-303 (GLRPSIAYTKSKAK). At 304–313 (DVEGIGDVDL) the chain is on the extracellular side. A beta stranded membrane pass occupies residues 314-325 (VNYFEVGATYYF). The Periplasmic segment spans residues 326–327 (NK). A beta stranded membrane pass occupies residues 328–337 (NMSTYVDYII). The Extracellular portion of the chain corresponds to 338-352 (NQIDSDNKLGVGSDD). The chain crosses the membrane as a beta stranded span at residues 353 to 362 (TVAVGIVYQF).

It belongs to the Gram-negative porin family. As to quaternary structure, homotrimer. Forms mixed heterotrimers with OmpC and with PhoE; other mixed heterotrimers are also probable. (Microbial infection) Trimeric complexes with colicin E3, BtuB and OmpF can be cross-linked and immunoprecipitated.

The protein resides in the cell outer membrane. Functionally, forms pores that allow passive diffusion of small molecules across the outer membrane. In terms of biological role, (Microbial infection) It is also a receptor for the bacteriophage T2. Is the major receptor for colicin E5. (Microbial infection) Probably translocates colicin E3 (and other A-type colicins) across the outer membrane. Its function is as follows. (Microbial infection) A mixed OmpC-OmpF heterotrimer is the outer membrane receptor for toxin CdiA-EC536 (ECL_04451); polymorphisms in extracellular loops 4 and 5 of OmpC confer susceptibility to CdiA-EC536-mediated toxicity. This chain is Outer membrane porin F (ompF), found in Escherichia coli (strain K12).